The sequence spans 181 residues: tRNA-splicing endonuclease (181 aa).

Catalysis depends on residues Tyr118, His126, and Lys157.

Belongs to the tRNA-intron endonuclease family. Archaeal short subfamily. In terms of assembly, homotetramer; although the tetramer contains four active sites, only two participate in the cleavage. Therefore, it should be considered as a dimer of dimers.

The enzyme catalyses pretRNA = a 3'-half-tRNA molecule with a 5'-OH end + a 5'-half-tRNA molecule with a 2',3'-cyclic phosphate end + an intron with a 2',3'-cyclic phosphate and a 5'-hydroxyl terminus.. Its function is as follows. Endonuclease that removes tRNA introns. Cleaves pre-tRNA at the 5'- and 3'-splice sites to release the intron. The products are an intron and two tRNA half-molecules bearing 2',3' cyclic phosphate and 5'-OH termini. Recognizes a pseudosymmetric substrate in which 2 bulged loops of 3 bases are separated by a stem of 4 bp. The chain is tRNA-splicing endonuclease from Sulfolobus acidocaldarius (strain ATCC 33909 / DSM 639 / JCM 8929 / NBRC 15157 / NCIMB 11770).